The following is a 320-amino-acid chain: 4-hydroxy-3-methylbut-2-enyl diphosphate reductase (320 aa).

C13 lines the [4Fe-4S] cluster pocket. Residues H41 and H75 each coordinate (2E)-4-hydroxy-3-methylbut-2-enyl diphosphate. The dimethylallyl diphosphate site is built by H41 and H75. Isopentenyl diphosphate contacts are provided by H41 and H75. [4Fe-4S] cluster is bound at residue C97. H125 provides a ligand contact to (2E)-4-hydroxy-3-methylbut-2-enyl diphosphate. Residue H125 participates in dimethylallyl diphosphate binding. Residue H125 coordinates isopentenyl diphosphate. The active-site Proton donor is the E127. T168 is a (2E)-4-hydroxy-3-methylbut-2-enyl diphosphate binding site. Residue C225 coordinates [4Fe-4S] cluster. S253, S254, N255, and S302 together coordinate (2E)-4-hydroxy-3-methylbut-2-enyl diphosphate. The dimethylallyl diphosphate site is built by S253, S254, N255, and S302. Positions 253, 254, 255, and 302 each coordinate isopentenyl diphosphate.

Belongs to the IspH family. [4Fe-4S] cluster is required as a cofactor.

It carries out the reaction isopentenyl diphosphate + 2 oxidized [2Fe-2S]-[ferredoxin] + H2O = (2E)-4-hydroxy-3-methylbut-2-enyl diphosphate + 2 reduced [2Fe-2S]-[ferredoxin] + 2 H(+). The enzyme catalyses dimethylallyl diphosphate + 2 oxidized [2Fe-2S]-[ferredoxin] + H2O = (2E)-4-hydroxy-3-methylbut-2-enyl diphosphate + 2 reduced [2Fe-2S]-[ferredoxin] + 2 H(+). Its pathway is isoprenoid biosynthesis; dimethylallyl diphosphate biosynthesis; dimethylallyl diphosphate from (2E)-4-hydroxy-3-methylbutenyl diphosphate: step 1/1. It participates in isoprenoid biosynthesis; isopentenyl diphosphate biosynthesis via DXP pathway; isopentenyl diphosphate from 1-deoxy-D-xylulose 5-phosphate: step 6/6. Catalyzes the conversion of 1-hydroxy-2-methyl-2-(E)-butenyl 4-diphosphate (HMBPP) into a mixture of isopentenyl diphosphate (IPP) and dimethylallyl diphosphate (DMAPP). Acts in the terminal step of the DOXP/MEP pathway for isoprenoid precursor biosynthesis. The sequence is that of 4-hydroxy-3-methylbut-2-enyl diphosphate reductase from Chlorobium luteolum (strain DSM 273 / BCRC 81028 / 2530) (Pelodictyon luteolum).